A 319-amino-acid chain; its full sequence is HTH-type transcriptional regulator YidZ (319 aa).

In terms of domain architecture, HTH lysR-type spans L8–T65. Residues V25 to A44 constitute a DNA-binding region (H-T-H motif).

Belongs to the LysR transcriptional regulatory family.

Its function is as follows. Involved in anaerobic NO protection. This chain is HTH-type transcriptional regulator YidZ, found in Escherichia coli O17:K52:H18 (strain UMN026 / ExPEC).